Here is a 466-residue protein sequence, read N- to C-terminus: Histidine--tRNA ligase (466 aa).

Belongs to the class-II aminoacyl-tRNA synthetase family. As to quaternary structure, homodimer.

Its subcellular location is the cytoplasm. It catalyses the reaction tRNA(His) + L-histidine + ATP = L-histidyl-tRNA(His) + AMP + diphosphate + H(+). The protein is Histidine--tRNA ligase of Xylella fastidiosa (strain M12).